The following is a 501-amino-acid chain: Cytochrome P450 2J5 (501 aa).

Cys447 provides a ligand contact to heme.

Belongs to the cytochrome P450 family. Requires heme as cofactor.

It is found in the endoplasmic reticulum membrane. It localises to the microsome membrane. It carries out the reaction an organic molecule + reduced [NADPH--hemoprotein reductase] + O2 = an alcohol + oxidized [NADPH--hemoprotein reductase] + H2O + H(+). This is Cytochrome P450 2J5 (Cyp2j5) from Mus musculus (Mouse).